A 230-amino-acid chain; its full sequence is Large ribosomal subunit protein uL1 (230 aa).

Belongs to the universal ribosomal protein uL1 family. As to quaternary structure, part of the 50S ribosomal subunit.

In terms of biological role, binds directly to 23S rRNA. The L1 stalk is quite mobile in the ribosome, and is involved in E site tRNA release. Protein L1 is also a translational repressor protein, it controls the translation of the L11 operon by binding to its mRNA. The sequence is that of Large ribosomal subunit protein uL1 from Leptospira borgpetersenii serovar Hardjo-bovis (strain JB197).